The chain runs to 311 residues: Malate dehydrogenase (311 aa).

NAD(+)-binding positions include 7-13 (GAAGGIG) and aspartate 34. Substrate-binding residues include arginine 81 and arginine 87. Residues asparagine 94 and 117–119 (ITN) each bind NAD(+). The substrate site is built by asparagine 119 and arginine 153. Catalysis depends on histidine 177, which acts as the Proton acceptor. Methionine 227 lines the NAD(+) pocket.

The protein belongs to the LDH/MDH superfamily. MDH type 1 family. In terms of assembly, homodimer.

It carries out the reaction (S)-malate + NAD(+) = oxaloacetate + NADH + H(+). In terms of biological role, catalyzes the reversible oxidation of malate to oxaloacetate. This chain is Malate dehydrogenase, found in Shewanella halifaxensis (strain HAW-EB4).